A 408-amino-acid polypeptide reads, in one-letter code: Peptidoglycan muramidase Tse3 (408 aa).

9 residues coordinate Ca(2+): N181, D253, Q254, E258, E375, S378, R379, D382, and N384.

In terms of assembly, forms a heterotetramer with Tsi3 consisting of two Tse3 dimers and two Tsi3 dimers. Formation of the complex inactivates Tse3 enzymatic activity. It depends on Ca(2+) as a cofactor.

It is found in the host membrane. It localises to the secreted. The catalysed reaction is Hydrolysis of (1-&gt;4)-beta-linkages between N-acetylmuramic acid and N-acetyl-D-glucosamine residues in a peptidoglycan and between N-acetyl-D-glucosamine residues in chitodextrins.. With respect to regulation, enzymatic activity depends on membrane binding. Toxin secreted by the H1 type VI (H1-T6SS) secretion system into the periplasm of recipient cells. Degrades peptidoglycan via muramidase activity thereby helping itself to compete with other bacteria. To protect itself, the bacterium synthesizes immunity protein Tsi3 that specifically interacts with and inactivates cognate toxin. In Pseudomonas aeruginosa (strain ATCC 15692 / DSM 22644 / CIP 104116 / JCM 14847 / LMG 12228 / 1C / PRS 101 / PAO1), this protein is Peptidoglycan muramidase Tse3.